The primary structure comprises 301 residues: Phosphatidylglycerol--prolipoprotein diacylglyceryl transferase (301 aa).

3 helical membrane-spanning segments follow: residues 17–37 (LAVRWYGLMYLVAFIAAIVVG), 59–79 (MLFYGVLGTILGGRLGYVLFY), and 97–117 (GGMSFHGGFLGVTLAMVLFAY). R142 lines the a 1,2-diacyl-sn-glycero-3-phospho-(1'-sn-glycerol) pocket. Helical transmembrane passes span 230–250 (MGAISAVFLIGYGLARFTVEF) and 265–285 (LSMGQWLSLPMILVGIGLLVW).

It belongs to the Lgt family.

It localises to the cell inner membrane. The enzyme catalyses L-cysteinyl-[prolipoprotein] + a 1,2-diacyl-sn-glycero-3-phospho-(1'-sn-glycerol) = an S-1,2-diacyl-sn-glyceryl-L-cysteinyl-[prolipoprotein] + sn-glycerol 1-phosphate + H(+). Its pathway is protein modification; lipoprotein biosynthesis (diacylglyceryl transfer). Its function is as follows. Catalyzes the transfer of the diacylglyceryl group from phosphatidylglycerol to the sulfhydryl group of the N-terminal cysteine of a prolipoprotein, the first step in the formation of mature lipoproteins. The polypeptide is Phosphatidylglycerol--prolipoprotein diacylglyceryl transferase (Paraburkholderia phytofirmans (strain DSM 17436 / LMG 22146 / PsJN) (Burkholderia phytofirmans)).